The chain runs to 417 residues: Phosphatidylcholine:ceramide cholinephosphotransferase 1 (417 aa).

The 64-residue stretch at 11 to 74 (WSPEEVTNWL…LHMIETLKMA (64 aa)) folds into the SAM domain. 5 consecutive transmembrane segments (helical) span residues 140–160 (FLAF…ISVV), 188–208 (FSIC…QWLL), 219–239 (FFCI…VTTL), 280–300 (MCGD…YLFI), and 308–328 (LWWY…CILL). Residue His289 is part of the active site. Residues 329–417 (AHDHYTVDVV…VKYSRLVNDT (89 aa)) lie on the Cytoplasmic side of the membrane. Residues His332 and Asp336 contribute to the active site.

Belongs to the sphingomyelin synthase family.

It is found in the golgi apparatus membrane. It carries out the reaction an N-acylsphing-4-enine + a 1,2-diacyl-sn-glycero-3-phosphocholine = a sphingomyelin + a 1,2-diacyl-sn-glycerol. The enzyme catalyses an N-acylsphing-4-enine + a 1,2-diacyl-sn-glycero-3-phosphoethanolamine = an N-acylsphing-4-enine 1-phosphoethanolamine + a 1,2-diacyl-sn-glycerol. Its function is as follows. Major sphingomyelin synthase at the Golgi apparatus. Catalyzes the reversible transfer of phosphocholine moiety in sphingomyelin biosynthesis: in the forward reaction transfers phosphocholine head group of phosphatidylcholine (PC) on to ceramide (CER) to form ceramide phosphocholine (sphingomyelin, SM) and diacylglycerol (DAG) as by-product, and in the reverse reaction transfers phosphocholine from SM to DAG to form PC and CER. The direction of the reaction depends on the levels of CER and DAG in Golgi membranes. Converts the newly synthesized CER, that is transported from the endoplasmic reticulum to the trans-Golgi by the Cer transport protein (CERT), to SM. Can form a heteromeric complex with glucosylceramide synthase (GCS) increasing SMS activity and reducing glucosylceramide synthesis, a critical mechanism that controls the metabolic fate of CER in the Golgi. Does not use free phosphorylcholine or CDP-choline as donor. Can also transfer phosphoethanolamine head group of phosphatidylethanolamine (PE) on to CER to form ceramide phosphoethanolamine (CPE). Regulates receptor-mediated signal transduction via mitogenic DAG and proapoptotic CER, as well as via SM, a structural component of membrane rafts that serve as platforms for signal transduction and protein sorting. Plays a role in secretory transport via regulation of DAG pool at the Golgi apparatus and its downstream effects on PRKD1. The polypeptide is Phosphatidylcholine:ceramide cholinephosphotransferase 1 (SGMS1) (Gallus gallus (Chicken)).